The primary structure comprises 147 residues: Urease accessory protein UreE (147 aa).

This sequence belongs to the UreE family.

It localises to the cytoplasm. Functionally, involved in urease metallocenter assembly. Binds nickel. Probably functions as a nickel donor during metallocenter assembly. This Nostoc sp. (strain PCC 7120 / SAG 25.82 / UTEX 2576) protein is Urease accessory protein UreE.